The chain runs to 293 residues: Protease HtpX homolog (293 aa).

2 helical membrane-spanning segments follow: residues 4 to 24 (IFLFVATNIAVIAVMSIVLSL) and 39 to 59 (PMLLVFSLVVGFTGAIISLLI). Position 144 (histidine 144) interacts with Zn(2+). Glutamate 145 is a catalytic residue. Residue histidine 148 coordinates Zn(2+). The next 2 helical transmembrane spans lie at 159–179 (LVQGVVNTFVVFLARVVGYFV) and 200–220 (ITVLVCQVVFGIAASVIVAWF). Glutamate 225 provides a ligand contact to Zn(2+).

This sequence belongs to the peptidase M48B family. It depends on Zn(2+) as a cofactor.

It localises to the cell inner membrane. This Herminiimonas arsenicoxydans protein is Protease HtpX homolog.